The primary structure comprises 412 residues: Phosphate-repressible acid phosphatase (412 aa).

An N-terminal signal peptide occupies residues 1–19 (MLTKQTLLAFVGALALATG). N-linked (GlcNAc...) asparagine glycans are attached at residues asparagine 74, asparagine 121, asparagine 186, and asparagine 208. Residue aspartate 215 is the Proton donor of the active site. Residues asparagine 217, asparagine 332, and asparagine 343 are each glycosylated (N-linked (GlcNAc...) asparagine).

In terms of processing, the N-terminus is blocked.

The protein resides in the secreted. The catalysed reaction is a phosphate monoester + H2O = an alcohol + phosphate. The sequence is that of Phosphate-repressible acid phosphatase (PHOA) from Penicillium chrysogenum (Penicillium notatum).